The following is a 177-amino-acid chain: 3-isopropylmalate dehydratase small subunit 1 (177 aa).

The tract at residues 157 to 177 (GRFPGEEPGAEASTETASAAE) is disordered. The span at 162–177 (EEPGAEASTETASAAE) shows a compositional bias: low complexity.

This sequence belongs to the LeuD family. LeuD type 2 subfamily. Heterodimer of LeuC and LeuD.

It catalyses the reaction (2R,3S)-3-isopropylmalate = (2S)-2-isopropylmalate. It participates in amino-acid biosynthesis; L-leucine biosynthesis; L-leucine from 3-methyl-2-oxobutanoate: step 2/4. Catalyzes the isomerization between 2-isopropylmalate and 3-isopropylmalate, via the formation of 2-isopropylmaleate. This is 3-isopropylmalate dehydratase small subunit 1 (leuD1) from Deinococcus radiodurans (strain ATCC 13939 / DSM 20539 / JCM 16871 / CCUG 27074 / LMG 4051 / NBRC 15346 / NCIMB 9279 / VKM B-1422 / R1).